Consider the following 1407-residue polypeptide: DNA-directed RNA polymerase subunit beta' (1407 aa).

Cysteine 70, cysteine 72, cysteine 85, and cysteine 88 together coordinate Zn(2+). 3 residues coordinate Mg(2+): aspartate 460, aspartate 462, and aspartate 464. At lysine 972 the chain carries N6-acetyllysine.

Belongs to the RNA polymerase beta' chain family. The RNAP catalytic core consists of 2 alpha, 1 beta, 1 beta' and 1 omega subunit. When a sigma factor is associated with the core the holoenzyme is formed, which can initiate transcription. It depends on Mg(2+) as a cofactor. The cofactor is Zn(2+).

It catalyses the reaction RNA(n) + a ribonucleoside 5'-triphosphate = RNA(n+1) + diphosphate. DNA-dependent RNA polymerase catalyzes the transcription of DNA into RNA using the four ribonucleoside triphosphates as substrates. The protein is DNA-directed RNA polymerase subunit beta' of Escherichia coli O6:K15:H31 (strain 536 / UPEC).